The sequence spans 318 residues: Aspartate carbamoyltransferase catalytic subunit (318 aa).

Carbamoyl phosphate is bound by residues R67 and T68. Residue K95 coordinates L-aspartate. Residues R117, H145, and Q148 each coordinate carbamoyl phosphate. Residues R178 and R236 each contribute to the L-aspartate site. Positions 277 and 278 each coordinate carbamoyl phosphate.

The protein belongs to the aspartate/ornithine carbamoyltransferase superfamily. ATCase family. Heterododecamer (2C3:3R2) of six catalytic PyrB chains organized as two trimers (C3), and six regulatory PyrI chains organized as three dimers (R2).

The enzyme catalyses carbamoyl phosphate + L-aspartate = N-carbamoyl-L-aspartate + phosphate + H(+). The protein operates within pyrimidine metabolism; UMP biosynthesis via de novo pathway; (S)-dihydroorotate from bicarbonate: step 2/3. In terms of biological role, catalyzes the condensation of carbamoyl phosphate and aspartate to form carbamoyl aspartate and inorganic phosphate, the committed step in the de novo pyrimidine nucleotide biosynthesis pathway. The sequence is that of Aspartate carbamoyltransferase catalytic subunit from Roseiflexus sp. (strain RS-1).